The primary structure comprises 459 residues: MLLLRRYSGGSLYSILPIRASIESTIRHFNSLEPLQSSDSTPTKGDYFAAINHVVNIVRREIHPERSLNSLRLPVTSEFVFRVLRATSRSSNDSLRFFNWARSNPSYTPTSMEYEELAKSLASHKKYESMWKILKQMKDLSLDISGETLCFIIEQYGKNGHVDQAVELFNGVPKTLGCQQTVDVYNSLLHALCDVKMFHGAYALIRRMIRKGLKPDKRTYAILVNGWCSAGKMKEAQEFLDEMSRRGFNPPARGRDLLIEGLLNAGYLESAKEMVSKMTKGGFVPDIQTFNILIEAISKSGEVEFCIEMYYTACKLGLCVDIDTYKTLIPAVSKIGKIDEAFRLLNNCVEDGHKPFPSLYAPIIKGMCRNGMFDDAFSFFSDMKVKAHPPNRPVYTMLITMCGRGGKFVDAANYLVEMTEMGLVPISRCFDMVTDGLKNGGKHDLAMRIEQLEVQLRGV.

Residues 1–7 constitute a mitochondrion transit peptide; the sequence is MLLLRRY. 9 PPR repeats span residues 110–144, 145–175, 181–215, 216–250, 251–285, 286–320, 321–355, 356–390, and 391–425; these read TSMEYEELAKSLASHKKYESMWKILKQMKDLSLDI, SGETLCFIIEQYGKNGHVDQAVELFNGVPKT, TVDVYNSLLHALCDVKMFHGAYALIRRMIRKGLKP, DKRTYAILVNGWCSAGKMKEAQEFLDEMSRRGFNP, PARGRDLLIEGLLNAGYLESAKEMVSKMTKGGFVP, DIQTFNILIEAISKSGEVEFCIEMYYTACKLGLCV, DIDTYKTLIPAVSKIGKIDEAFRLLNNCVEDGHKP, FPSLYAPIIKGMCRNGMFDDAFSFFSDMKVKAHPP, and NRPVYTMLITMCGRGGKFVDAANYLVEMTEMGLVP.

The protein belongs to the PPR family. P subfamily.

Its subcellular location is the mitochondrion. The chain is Pentatricopeptide repeat-containing protein At5g18390, mitochondrial from Arabidopsis thaliana (Mouse-ear cress).